The following is a 299-amino-acid chain: Caspase-1 (299 aa).

Positions 1 to 28 (MLDGKQDNGNVDSVDIKQRTNGGGDEGD) are excised as a propeptide. The tract at residues 1 to 45 (MLDGKQDNGNVDSVDIKQRTNGGGDEGDALGSNSSSQPNRVARMP) is disordered. Residues histidine 136 and cysteine 178 contribute to the active site. Residues 185–195 (GGITLSRTETD) constitute a propeptide that is removed on maturation.

This sequence belongs to the peptidase C14A family. Heterotetramer that consists of two anti-parallel arranged heterodimers, each one formed by a 19/18 kDa (p19/18) and a 12 kDa (p12) subunit. The two subunits are derived from the precursor sequence by an autocatalytic mechanism.

Functionally, involved in the activation cascade of caspases responsible for apoptosis execution. Inhibited by the baculovirus anti-apoptotic protein p35. Cleaves p35 and nuclear immunophilin FKBP46. This chain is Caspase-1, found in Spodoptera frugiperda (Fall armyworm).